A 564-amino-acid polypeptide reads, in one-letter code: Arrestin domain-containing protein E (564 aa).

Residues 74–146 (SQQPQSSQPS…NTSNGFSPPN (73 aa)) are compositionally biased toward low complexity. Disordered regions lie at residues 74-150 (SQQP…LNKN) and 245-286 (ASQP…SFPS). A compositionally biased stretch (pro residues) spans 250-259 (PQQPQQPQPQ). Low complexity predominate over residues 260-269 (QPQQQQFQQQ). Positions 270–285 (SYNNNNSTQSMLSSFP) are enriched in polar residues. In terms of domain architecture, LIM zinc-binding spans 348-413 (DKCAACDALL…PMCFESTTGL (66 aa)).

The polypeptide is Arrestin domain-containing protein E (adcE) (Dictyostelium discoideum (Social amoeba)).